Consider the following 312-residue polypeptide: Fasciclin-like arabinogalactan protein elcF (312 aa).

A signal peptide spans 1–16; that stretch reads MKLFTLLLPALTSAHS. FAS1 domains follow at residues 17–160 and 162–289; these read LSTL…NASM and LPHN…DKVL. Residues Asn48, Asn68, Asn113, Asn157, and Asn165 are each glycosylated (N-linked (GlcNAc...) asparagine).

It belongs to the fasciclin-like AGP family.

Its pathway is secondary metabolite biosynthesis. Functionally, fasciclin-like arabinogalactan protein; part of the gene cluster that mediates the biosynthesis of elsinochrome C, a perelyenequinone phytotoxin structurally similar to cercosporin. The first step of elsinochrome C biosynthesis is performed by the polyketide synthase elcA which catalyzes the formation of nor-toralactone. The starter unit acyltransferase (SAT) domain of elcA initiates polyketide extension by the selective utilization of acetyl-CoA, which is elongated to the heptaketide in the beta-ketoacyl synthase (KS) domain by successive condensations with six malonyl units introduced by the malonyl acyltransferase (MAT) domain. The product template (PT) domain catalyzes C4-C9 and C2-C11 aldol cyclizations and dehydrations to a trihydroxynaphthalene, which is thought to be delivered to the thioesterase (TE) domain for product release. The bifunctional enzyme elcB then methylates nor-toralactone to toralactone before conducting an unusual oxidative aromatic ring opening. The next step in perylenequinone biosynthesis is an O-methylation at the nascent OH-6 of the elcB product performed by the O-methyltransferase elcD. The oxidative coupling of the two monomeric naphthol units in perylenequinone biosynthesis is catalyzed by the FAD-dependent monooxygenase elcE and the multicopper oxidase elcG. ElcG might catalyze the first intermolecular coupling in a regio- and stereo-selective manner via a phenol radical coupling mechanism and the elcE could forge the second C-C bond intramolecularly via a hydride transfer mechanism. The fasciclin domain-containing protein elcF might also play a role duting this step. The last piece of the puzzle in the biosynthesis of elsinochrome C is the additional annulation by enolate coupling to afford the dihydrobenzo(ghi)perylenequinone system, catalyzed by the FAD-dependent monooxygenase elcH. The polypeptide is Fasciclin-like arabinogalactan protein elcF (Phaeosphaeria nodorum (strain SN15 / ATCC MYA-4574 / FGSC 10173) (Glume blotch fungus)).